Consider the following 478-residue polypeptide: FERM domain-containing protein B (478 aa).

Disordered regions lie at residues 19–39 (ELIP…TITS), 129–196 (EENS…GFLT), and 202–221 (KAQS…TIAS). 2 stretches are compositionally biased toward low complexity: residues 22 to 39 (PTQS…TITS) and 129 to 164 (EENS…ANDG). The FERM domain occupies 48–468 (VLIRIYFIDD…DWSEEWESKE (421 aa)). Residues 165 to 179 (SGSGSGSGSGSGSGS) show a composition bias toward gly residues. 2 stretches are compositionally biased toward low complexity: residues 180–189 (GTSTPNSPKG) and 204–216 (QSPQ…SSLS).

In Dictyostelium discoideum (Social amoeba), this protein is FERM domain-containing protein B (frmB).